The chain runs to 260 residues: Thiamine thiazole synthase (260 aa).

Residues serine 41, 60-61, glycine 68, valine 131, and 159-161 each bind NAD(+); these read ER and HVD. Fe cation is bound by residues aspartate 161 and histidine 176. Methionine 225 contributes to the NAD(+) binding site. Residue arginine 235 participates in glycine binding.

The protein belongs to the THI4 family. As to quaternary structure, homooctamer; tetramer of dimers. It depends on Fe(2+) as a cofactor.

It carries out the reaction hydrogen sulfide + glycine + NAD(+) = ADP-5-ethyl-4-methylthiazole-2-carboxylate + nicotinamide + 3 H2O + H(+). The protein operates within cofactor biosynthesis; thiamine diphosphate biosynthesis. Involved in the biosynthesis of the thiazole moiety of thiamine. Catalyzes the conversion of NAD and glycine to adenosine diphosphate 5-(2-hydroxyethyl)-4-methylthiazole-2-carboxylate (ADT), an adenylated thiazole intermediate, using free sulfide as a source of sulfur. This chain is Thiamine thiazole synthase, found in Archaeoglobus fulgidus (strain ATCC 49558 / DSM 4304 / JCM 9628 / NBRC 100126 / VC-16).